The chain runs to 257 residues: Pyridoxine/pyridoxamine 5'-phosphate oxidase (257 aa).

33–36 (RIKY) contributes to the substrate binding site. 90–93 (RFVL) is an FMN binding site. Lys-95 is a pyridoxal 5'-phosphate binding site. FMN is bound by residues 105–106 (YT) and Lys-112. Positions 152, 156, and 160 each coordinate pyridoxal 5'-phosphate. FMN-binding positions include 169-170 (QS) and Trp-216. 222–224 (RLH) contacts substrate. Arg-226 contacts FMN.

Belongs to the pyridoxamine 5'-phosphate oxidase family. Homodimer. The cofactor is FMN. In terms of tissue distribution, expressed in silk gland and fat body of the larva.

It catalyses the reaction pyridoxamine 5'-phosphate + O2 + H2O = pyridoxal 5'-phosphate + H2O2 + NH4(+). The catalysed reaction is pyridoxine 5'-phosphate + O2 = pyridoxal 5'-phosphate + H2O2. The protein operates within cofactor metabolism; pyridoxal 5'-phosphate salvage; pyridoxal 5'-phosphate from pyridoxamine 5'-phosphate: step 1/1. It functions in the pathway cofactor metabolism; pyridoxal 5'-phosphate salvage; pyridoxal 5'-phosphate from pyridoxine 5'-phosphate: step 1/1. Catalyzes the oxidation of either pyridoxine 5'-phosphate (PNP) or pyridoxamine 5'-phosphate (PMP) into pyridoxal 5'-phosphate (PLP). This Bombyx mori (Silk moth) protein is Pyridoxine/pyridoxamine 5'-phosphate oxidase.